The primary structure comprises 116 residues: Biogenesis of lysosome-related organelles complex 1 subunit CNL1 (116 aa).

The stretch at 63–95 (DIVDVNIQSFKDILSKCEELENYFTMLDQIEMI) forms a coiled coil.

It belongs to the BLOC1S4 family. As to quaternary structure, component of the biogenesis of lysosome-related organelles complex-1 (BLOC-1).

Its subcellular location is the cytoplasm. In terms of biological role, component of the biogenesis of lysosome-related organelles complex-1 (BLOC-1), a complex that is involved in endosomal cargo sorting. The protein is Biogenesis of lysosome-related organelles complex 1 subunit CNL1 (CLN1) of Vanderwaltozyma polyspora (strain ATCC 22028 / DSM 70294 / BCRC 21397 / CBS 2163 / NBRC 10782 / NRRL Y-8283 / UCD 57-17) (Kluyveromyces polysporus).